We begin with the raw amino-acid sequence, 158 residues long: MPKVAVIMGSKNDWEYMREAVEILKQFGIDYEARVVSAHRTPEFMMQYAKEAEKRGIEVIIAGAGGAAHLPGMVASLTSLPVIGVPIPSKNLNGLDSLLSIVQMPYGVPVATVAIGGAKNAALLAIRILGIKYKELADKIKKFSEDMRNDVLSTRLEA.

Residues serine 10, aspartate 13, and arginine 40 each contribute to the substrate site.

It belongs to the AIR carboxylase family. Class I subfamily.

It carries out the reaction 5-carboxyamino-1-(5-phospho-D-ribosyl)imidazole + H(+) = 5-amino-1-(5-phospho-D-ribosyl)imidazole-4-carboxylate. The protein operates within purine metabolism; IMP biosynthesis via de novo pathway; 5-amino-1-(5-phospho-D-ribosyl)imidazole-4-carboxylate from 5-amino-1-(5-phospho-D-ribosyl)imidazole (N5-CAIR route): step 2/2. Its function is as follows. Catalyzes the conversion of N5-carboxyaminoimidazole ribonucleotide (N5-CAIR) to 4-carboxy-5-aminoimidazole ribonucleotide (CAIR). The protein is N5-carboxyaminoimidazole ribonucleotide mutase of Saccharolobus solfataricus (strain ATCC 35092 / DSM 1617 / JCM 11322 / P2) (Sulfolobus solfataricus).